A 106-amino-acid chain; its full sequence is MIVTTTPNIDGRKIQNYYGIVTGEAIMGANVVRDIFAGITDIIGGRSGAYEEKLQDARQIALKEMEQNAARMGANAVVGVDIDYEVVGQSGSMLMVSASGTAVTVV.

This sequence belongs to the UPF0145 family.

The sequence is that of UPF0145 protein Dhaf_3855 from Desulfitobacterium hafniense (strain DSM 10664 / DCB-2).